Here is a 547-residue protein sequence, read N- to C-terminus: Agglutinin-1 (547 aa).

A signal peptide spans 1 to 20; that stretch reads MKFETTKNKLHGNAYYQAQF. Position 21 is a pyrrolidone carboxylic acid (Q21). E183 is an active-site residue. 3 disulfides stabilise this stretch: C266/C288, C305/C324, and C348/C365. A propeptide spans 279–280 (linker peptide); that stretch reads RS. A Ricin B-type lectin 1 domain is found at 292–419; it reads YEPTVRIGGR…YRMRQGWRTG (128 aa). A 1-alpha repeat occupies 302 to 344; it reads DGLCVDVSDNAYNNGNPIILWKCKDQLEVNQLWTLKSDKTIRS. The 1-beta repeat unit spans residues 345–385; the sequence is KGKCLTTYGYAPGNYVMIYDCSSAVAEATYWDIWDNGTIIN. N380 and N420 each carry an N-linked (GlcNAc...) asparagine glycan. The 1-gamma repeat unit spans residues 388-420; the sequence is SGLVLSAESSSMGGTLTVQKNDYRMRQGWRTGN. The Ricin B-type lectin 2 domain occupies 422–546; the sequence is TSPFVTSIAG…GNANQMWATL (125 aa). The 2-alpha repeat unit spans residues 433 to 468; that stretch reads FKLCMEAHGNSMWLDVCDITKEEQQWAVYPDGSIRP. 2 cysteine pairs are disulfide-bonded: C436–C449 and C475–C492. A 2-beta repeat occupies 472 to 511; it reads TNNCLTCEEHKQGATIVMMGCSNAWASQRWVFKSDGTIYN. A 2-gamma repeat occupies 514-547; it reads DDMVMDVKSSDPSLKQIILWPYTGNANQMWATLF.

In the N-terminal section; belongs to the ribosome-inactivating protein family. Type 2 RIP subfamily. Heterotetramer of two A and two B chains.

The catalysed reaction is Endohydrolysis of the N-glycosidic bond at one specific adenosine on the 28S rRNA.. Its function is as follows. The A chain is responsible for inhibiting protein synthesis through the catalytic inactivation of 60S ribosomal subunits by removing adenine from position 4,324 of 28S rRNA. Less toxic than abrin-a. In terms of biological role, the B chain is a galactose-specific lectin that facilitates the binding to the cell membrane that precedes endocytosis. The protein is Agglutinin-1 of Abrus precatorius (Indian licorice).